The following is a 314-amino-acid chain: 4-diphosphocytidyl-2-C-methyl-D-erythritol kinase (314 aa).

K11 is an active-site residue. Position 99–109 (P99–T109) interacts with ATP. The active site involves D141.

It belongs to the GHMP kinase family. IspE subfamily.

It catalyses the reaction 4-CDP-2-C-methyl-D-erythritol + ATP = 4-CDP-2-C-methyl-D-erythritol 2-phosphate + ADP + H(+). It participates in isoprenoid biosynthesis; isopentenyl diphosphate biosynthesis via DXP pathway; isopentenyl diphosphate from 1-deoxy-D-xylulose 5-phosphate: step 3/6. Its function is as follows. Catalyzes the phosphorylation of the position 2 hydroxy group of 4-diphosphocytidyl-2C-methyl-D-erythritol. This chain is 4-diphosphocytidyl-2-C-methyl-D-erythritol kinase, found in Trichodesmium erythraeum (strain IMS101).